The following is a 337-amino-acid chain: Tetraacyldisaccharide 4'-kinase (337 aa).

55–62 lines the ATP pocket; sequence NAGGTGKT.

The protein belongs to the LpxK family.

It carries out the reaction a lipid A disaccharide + ATP = a lipid IVA + ADP + H(+). Its pathway is glycolipid biosynthesis; lipid IV(A) biosynthesis; lipid IV(A) from (3R)-3-hydroxytetradecanoyl-[acyl-carrier-protein] and UDP-N-acetyl-alpha-D-glucosamine: step 6/6. Its function is as follows. Transfers the gamma-phosphate of ATP to the 4'-position of a tetraacyldisaccharide 1-phosphate intermediate (termed DS-1-P) to form tetraacyldisaccharide 1,4'-bis-phosphate (lipid IVA). In Dinoroseobacter shibae (strain DSM 16493 / NCIMB 14021 / DFL 12), this protein is Tetraacyldisaccharide 4'-kinase.